We begin with the raw amino-acid sequence, 160 residues long: Protein-export protein SecB (160 aa).

The protein belongs to the SecB family. Homotetramer, a dimer of dimers. One homotetramer interacts with 1 SecA dimer.

Its subcellular location is the cytoplasm. One of the proteins required for the normal export of preproteins out of the cell cytoplasm. It is a molecular chaperone that binds to a subset of precursor proteins, maintaining them in a translocation-competent state. It also specifically binds to its receptor SecA. This chain is Protein-export protein SecB, found in Orientia tsutsugamushi (strain Boryong) (Rickettsia tsutsugamushi).